Here is an 89-residue protein sequence, read N- to C-terminus: Small ribosomal subunit protein uS15 (89 aa).

A compositionally biased stretch (basic and acidic residues) spans 1 to 13; the sequence is MTISKERKEEVIS. A disordered region spans residues 1–24; that stretch reads MTISKERKEEVISEHGAAAGDTGS.

The protein belongs to the universal ribosomal protein uS15 family. Part of the 30S ribosomal subunit. Forms a bridge to the 50S subunit in the 70S ribosome, contacting the 23S rRNA.

Functionally, one of the primary rRNA binding proteins, it binds directly to 16S rRNA where it helps nucleate assembly of the platform of the 30S subunit by binding and bridging several RNA helices of the 16S rRNA. Its function is as follows. Forms an intersubunit bridge (bridge B4) with the 23S rRNA of the 50S subunit in the ribosome. This is Small ribosomal subunit protein uS15 from Rhodopirellula baltica (strain DSM 10527 / NCIMB 13988 / SH1).